A 715-amino-acid polypeptide reads, in one-letter code: Fatty acid oxidation complex subunit alpha (715 aa).

The tract at residues 1–190 (MTTTSAFMLN…KAGLVDDVVP (190 aa)) is enoyl-CoA hydratase. The segment at 306 to 715 (GPLNSVGILG…WTNGETDQGN (410 aa)) is 3-hydroxyacyl-CoA dehydrogenase.

This sequence in the N-terminal section; belongs to the enoyl-CoA hydratase/isomerase family. It in the central section; belongs to the 3-hydroxyacyl-CoA dehydrogenase family. In terms of assembly, heterotetramer of two alpha chains (FadJ) and two beta chains (FadI).

The protein localises to the cytoplasm. The catalysed reaction is a (3S)-3-hydroxyacyl-CoA = a (2E)-enoyl-CoA + H2O. It carries out the reaction a 4-saturated-(3S)-3-hydroxyacyl-CoA = a (3E)-enoyl-CoA + H2O. The enzyme catalyses a (3S)-3-hydroxyacyl-CoA + NAD(+) = a 3-oxoacyl-CoA + NADH + H(+). It catalyses the reaction (3S)-3-hydroxybutanoyl-CoA = (3R)-3-hydroxybutanoyl-CoA. The protein operates within lipid metabolism; fatty acid beta-oxidation. Catalyzes the formation of a hydroxyacyl-CoA by addition of water on enoyl-CoA. Also exhibits 3-hydroxyacyl-CoA epimerase and 3-hydroxyacyl-CoA dehydrogenase activities. The sequence is that of Fatty acid oxidation complex subunit alpha from Salmonella agona (strain SL483).